Reading from the N-terminus, the 253-residue chain is Triosephosphate isomerase (253 aa).

8–10 (NWK) is a binding site for substrate. Histidine 93 (electrophile) is an active-site residue. Glutamate 165 serves as the catalytic Proton acceptor. Residues glycine 171, serine 210, and 231-232 (GG) each bind substrate.

Belongs to the triosephosphate isomerase family. In terms of assembly, homodimer.

It is found in the cytoplasm. The catalysed reaction is D-glyceraldehyde 3-phosphate = dihydroxyacetone phosphate. The protein operates within carbohydrate biosynthesis; gluconeogenesis. It participates in carbohydrate degradation; glycolysis; D-glyceraldehyde 3-phosphate from glycerone phosphate: step 1/1. In terms of biological role, involved in the gluconeogenesis. Catalyzes stereospecifically the conversion of dihydroxyacetone phosphate (DHAP) to D-glyceraldehyde-3-phosphate (G3P). This chain is Triosephosphate isomerase, found in Francisella tularensis subsp. novicida (strain U112).